Reading from the N-terminus, the 676-residue chain is Capsid vertex component 1 (676 aa).

Positions 253–264 are enriched in low complexity; it reads HPVRPSSSRVAS. The interval 253 to 308 is disordered; sequence HPVRPSSSRVASGLLQSAKGHGAQTSNTDPINNGSFDGVLEPPGQGRFTGKKNNSS. Over residues 275-287 the composition is skewed to polar residues; the sequence is AQTSNTDPINNGS.

Belongs to the herpesviridae CVC1 protein family. Interacts (via C-terminus) with capsid vertex component 2/CVC2.

The protein resides in the virion. It localises to the host nucleus. Functionally, capsid vertex-specific component that plays a role during viral DNA encapsidation, assuring correct genome cleavage and presumably stabilizing capsids that contain full-length viral genomes. The polypeptide is Capsid vertex component 1 (Varicella-zoster virus (strain Dumas) (HHV-3)).